The chain runs to 475 residues: Ribulose bisphosphate carboxylase large chain (475 aa).

Positions 1–2 are excised as a propeptide; the sequence is MS. P3 carries the post-translational modification N-acetylproline. K14 bears the N6,N6,N6-trimethyllysine mark. Residues N123 and T173 each contribute to the substrate site. Catalysis depends on K175, which acts as the Proton acceptor. Residue K177 coordinates substrate. Positions 201, 203, and 204 each coordinate Mg(2+). K201 bears the N6-carboxylysine mark. H294 (proton acceptor) is an active-site residue. R295, H327, and S379 together coordinate substrate.

It belongs to the RuBisCO large chain family. Type I subfamily. In terms of assembly, heterohexadecamer of 8 large chains and 8 small chains; disulfide-linked. The disulfide link is formed within the large subunit homodimers. It depends on Mg(2+) as a cofactor. Post-translationally, the disulfide bond which can form in the large chain dimeric partners within the hexadecamer appears to be associated with oxidative stress and protein turnover.

The protein localises to the plastid. It is found in the chloroplast. It carries out the reaction 2 (2R)-3-phosphoglycerate + 2 H(+) = D-ribulose 1,5-bisphosphate + CO2 + H2O. It catalyses the reaction D-ribulose 1,5-bisphosphate + O2 = 2-phosphoglycolate + (2R)-3-phosphoglycerate + 2 H(+). In terms of biological role, ruBisCO catalyzes two reactions: the carboxylation of D-ribulose 1,5-bisphosphate, the primary event in carbon dioxide fixation, as well as the oxidative fragmentation of the pentose substrate in the photorespiration process. Both reactions occur simultaneously and in competition at the same active site. The protein is Ribulose bisphosphate carboxylase large chain of Pinus radiata (Monterey pine).